A 297-amino-acid polypeptide reads, in one-letter code: Ribosomal protein L11 methyltransferase (297 aa).

S-adenosyl-L-methionine-binding residues include Thr-150, Gly-171, Asp-193, and Asn-233.

This sequence belongs to the methyltransferase superfamily. PrmA family.

The protein resides in the cytoplasm. It catalyses the reaction L-lysyl-[protein] + 3 S-adenosyl-L-methionine = N(6),N(6),N(6)-trimethyl-L-lysyl-[protein] + 3 S-adenosyl-L-homocysteine + 3 H(+). Methylates ribosomal protein L11. The polypeptide is Ribosomal protein L11 methyltransferase (Laribacter hongkongensis (strain HLHK9)).